The following is a 368-amino-acid chain: tRNA-specific 2-thiouridylase MnmA (368 aa).

ATP is bound by residues 10 to 17 (AMSGGVDS) and methionine 36. The active-site Nucleophile is the cysteine 108. Cysteine 108 and cysteine 206 are oxidised to a cystine. An ATP-binding site is contributed by glycine 132. The segment at 156–158 (KDQ) is interaction with tRNA. Cysteine 206 functions as the Cysteine persulfide intermediate in the catalytic mechanism. An interaction with tRNA region spans residues 312-313 (RY).

Belongs to the MnmA/TRMU family.

The protein localises to the cytoplasm. The catalysed reaction is S-sulfanyl-L-cysteinyl-[protein] + uridine(34) in tRNA + AH2 + ATP = 2-thiouridine(34) in tRNA + L-cysteinyl-[protein] + A + AMP + diphosphate + H(+). Functionally, catalyzes the 2-thiolation of uridine at the wobble position (U34) of tRNA, leading to the formation of s(2)U34. In Natranaerobius thermophilus (strain ATCC BAA-1301 / DSM 18059 / JW/NM-WN-LF), this protein is tRNA-specific 2-thiouridylase MnmA.